Reading from the N-terminus, the 83-residue chain is uncharacterized protein (83 aa).

Residues 58 to 78 (AVLLWIAIIATLGNIVVVGVV) traverse the membrane as a helical segment.

The protein resides in the membrane. This is an uncharacterized protein from Homo sapiens (Human).